The following is a 133-amino-acid chain: Salivary cystatin-L (133 aa).

An N-terminal signal peptide occupies residues 1 to 19; the sequence is MTSTFALVLLLGGMAVCVA. One can recognise a Cystatin domain in the interval 30-118; that stretch reads ANHQANPEFL…RTCTTVVFEN (89 aa). Disulfide bonds link C89–C100 and C111–C130.

This sequence belongs to the cystatin family. As to quaternary structure, monomer. Can form homodimers in vitro, but probably not in vivo. Homodimers are predicted to be inactive; dimerization disrupts the interaction with target proteases. In terms of tissue distribution, detected in saliva (at protein level). Detected in salivary gland and midgut.

Its subcellular location is the secreted. Contributes to the suppression of the host's immune response to tick salivary proteins and is important for successful feeding on hosts. Inhibitor of cysteine proteinases. Inhibits host papain and cathepsin L (CTSL) (in vitro). Inhibits host cathepsin S (CTSS) (in vitro). Inhibits host CTSV and CTSC, but to a lesser degree (in vitro). Inhibits host immune responses via its inhibition of host cathepsins. Inhibits differentiation of host dendritic cells. Inhibits proliferation of host T-cells in response to antigen stimulus. Down-regulates IL1B production by host mast cells, and this then leads to impaired activation of IL1R1, resulting in decreased IL9 production. Inhibits host inflammatory reactions and recruitment of host neutrophils. Attenuates IFN-beta (IFNB1)-triggered JAK/STAT signaling pathway in mouse dendritic cells. In terms of biological role, (Microbial infection) Down-regulates TLR2-mediated host responses to infection by Borrelia burgdorferi and the production of the chemokine CCL3 by host dendritic cells. Down-regulates host responses to infection by B.burgdorferi and the production of IFNB1 by host dendritic cells. The sequence is that of Salivary cystatin-L from Ixodes scapularis (Black-legged tick).